The primary structure comprises 293 residues: 5'-3' exoribonuclease Rnm (293 aa).

Positions 13, 15, 20, 45, 72, 83, 198, 255, and 257 each coordinate Mn(2+).

It belongs to the PHP family. TrpH/YciV subfamily. The cofactor is Mn(2+).

The enzyme catalyses a ribonucleoside 3',5'-bisphosphate + H2O = a ribonucleoside 5'-phosphate + phosphate. In terms of biological role, exoribonuclease that catalyzes the last steps of 5S, 16S and 23S rRNA 5'-end maturation. Removes 3 nucleotides (nt) from the 5' end of 5S, 16S and 23S rRNA precursors to generate the mature 5' ends. Precursors with longer extensions are not processed (7 nt at the 5' end of pre-23S rRNA or 66 nt at the 5'-end of 16S rRNA are not processed). 5S and 23S rRNA maturation occurs more efficiently and accurately on ribosomal particles as compared to free RNA; the enzyme overdigests free RNA but generates the correct 5'-end in ribosomes from rnm deletion strains. Efficiently catalyzes the hydrolysis of the 3'-phosphate from 3',5'-bis-phosphonucleotides as well as the successive hydrolysis of 5'-phosphomononucleotides from the 5'-end of short pieces of RNA and DNA, with no specificity toward the identity of the nucleotide base. Is more efficient at hydrolyzing RNA oligonucleotides than DNA oligonucleotides. This enzyme can also hydrolyze annealed DNA duplexes, albeit at a catalytic efficiency approximately 10-fold lower than that of the corresponding single-stranded oligonucleotides. This chain is 5'-3' exoribonuclease Rnm, found in Escherichia coli (strain K12).